A 222-amino-acid chain; its full sequence is Large ribosomal subunit protein uL3 (222 aa).

A disordered region spans residues 129–150; it reads HNFRGLPDSHGTERKHRSPGSI.

Belongs to the universal ribosomal protein uL3 family. In terms of assembly, part of the 50S ribosomal subunit. Forms a cluster with proteins L14 and L19.

Its function is as follows. One of the primary rRNA binding proteins, it binds directly near the 3'-end of the 23S rRNA, where it nucleates assembly of the 50S subunit. This is Large ribosomal subunit protein uL3 from Acidothermus cellulolyticus (strain ATCC 43068 / DSM 8971 / 11B).